The sequence spans 89 residues: Large ribosomal subunit protein eL34 (89 aa).

Residues 1 to 22 (MPAPRYKSGSSKKVYRKAPGNS) are disordered.

It belongs to the eukaryotic ribosomal protein eL34 family.

In Methanococcus maripaludis (strain C7 / ATCC BAA-1331), this protein is Large ribosomal subunit protein eL34.